An 858-amino-acid chain; its full sequence is Selenocysteine insertion sequence-binding protein 2 (858 aa).

Disordered stretches follow at residues 127 to 261, 275 to 296, and 327 to 625; these read KPRH…GDVG, SDHT…CTQE, and LKKT…DSAT. 3 stretches are compositionally biased toward basic and acidic residues: residues 147–166, 188–197, and 215–224; these read KPSD…RRAD, SSLKSDGYHK, and PEFEFSRLDF. Polar residues-rich tracts occupy residues 281–296 and 327–352; these read AVTS…CTQE and LKKT…NPSY. The Nuclear localization signal motif lies at 380–387; it reads KNKKKKEK. The span at 418–429 shows a compositional bias: basic residues; sequence RRHRGQSPKLHS. Positions 430 to 447 are enriched in polar residues; the sequence is KQQTQNEFKTSGKKSQVP. Over residues 539 to 548 the composition is skewed to basic and acidic residues; sequence ILKERQERMQ. Composition is skewed to polar residues over residues 554–563 and 571–582; these read SAVSLTVASD and GASNQTPSQDNP. The segment at 678–699 is RNA-binding; that stretch reads LVLGLREVLKHLKLRKLKCIII. The tract at residues 785-819 is disordered; it reads MRQEQAGEPGPQSPPSPPMQDPIPSTEEGTLPSTG. The segment covering 795-805 has biased composition (pro residues); the sequence is PQSPPSPPMQD.

It localises to the cytoplasm. It is found in the nucleus. In terms of biological role, mRNA-binding protein that binds to the SECIS (selenocysteine insertion sequence) element present in the 3'-UTR of mRNAs encoding selenoproteins and facilitates the incorporation of the rare amino acid selenocysteine. Insertion of selenocysteine at UGA codons is mediated by SECISBP2 and EEFSEC: SECISBP2 (1) specifically binds the SECIS sequence once the 80S ribosome encounters an in-frame UGA codon and (2) contacts the RPS27A/eS31 of the 40S ribosome before ribosome stalling. (3) GTP-bound EEFSEC then delivers selenocysteinyl-tRNA(Sec) to the 80S ribosome and adopts a preaccommodated state conformation. (4) After GTP hydrolysis, EEFSEC dissociates from the assembly, selenocysteinyl-tRNA(Sec) accommodates, and peptide bond synthesis and selenoprotein elongation occur. This chain is Selenocysteine insertion sequence-binding protein 2, found in Mus musculus (Mouse).